The sequence spans 154 residues: Endoribonuclease YbeY (154 aa).

Residues His114, His118, and His124 each contribute to the Zn(2+) site.

Belongs to the endoribonuclease YbeY family. The cofactor is Zn(2+).

Its subcellular location is the cytoplasm. In terms of biological role, single strand-specific metallo-endoribonuclease involved in late-stage 70S ribosome quality control and in maturation of the 3' terminus of the 16S rRNA. The sequence is that of Endoribonuclease YbeY from Marinomonas sp. (strain MWYL1).